A 113-amino-acid polypeptide reads, in one-letter code: UPF0482 protein KPN78578_15540 (113 aa).

The signal sequence occupies residues 1-28; sequence MNMTLNKRWCLTAILALSAVVYTSSSYA. Positions 38–60 are disordered; sequence GDSAQSRQQASMEKEQWNDTRSL. Positions 39 to 48 are enriched in polar residues; it reads DSAQSRQQAS. Over residues 49-59 the composition is skewed to basic and acidic residues; that stretch reads MEKEQWNDTRS.

Belongs to the UPF0482 family.

The polypeptide is UPF0482 protein KPN78578_15540 (Klebsiella pneumoniae subsp. pneumoniae (strain ATCC 700721 / MGH 78578)).